The primary structure comprises 577 residues: Protein NUCLEOLAR COMPLEX ASSOCIATED 4 (577 aa).

A disordered region spans residues proline 230 to glycine 263. The next 3 helical transmembrane spans lie at isoleucine 329–glycine 349, leucine 350–alanine 370, and leucine 404–leucine 424.

It belongs to the CBF/MAK21 family. As to quaternary structure, component of the ribosomal small subunit (SSU) processome composed of at least 40 protein subunits and snoRNA U3. In terms of tissue distribution, mostly expressed in flowers and stems and at lower levels in roots, hypocotyls, siliques, leaves and seeds.

Its subcellular location is the nucleus membrane. It localises to the nucleus. It is found in the nucleolus. Its function is as follows. Essential protein required during embryogenesis. Involved in nucleolar processing of ribosomal RNA (rRNA) 40S and 90S ribosomal subunits and ribosome assembly; early in ribosome biogenesis, especially required during the maturation of 5.8S rRNA. Has a role in the nuclear export of 40S pre-ribosomal subunit to the cytoplasm. In Arabidopsis thaliana (Mouse-ear cress), this protein is Protein NUCLEOLAR COMPLEX ASSOCIATED 4.